Here is a 420-residue protein sequence, read N- to C-terminus: Protein maelstrom homolog (420 aa).

A DNA-binding region (HMG box) is located at residues 4–73 (RRASRNAYYF…AQGKDSGPSE (70 aa)). Disordered regions lie at residues 62-94 (RAAQGKDSGPSEKQKPVCTPLRKPGMLVPKQNV), 341-372 (GFSHFSSSNQEQRSNTPTGDYPSGVKISGQNS), and 392-420 (NIHKFSNCETPVSPYTSPKHGYKSFSSLS). Composition is skewed to polar residues over residues 344–358 (HFSSSNQEQRSNTPT) and 392–407 (NIHKFSNCETPVSPYT).

This sequence belongs to the maelstrom family. As to quaternary structure, interacts with SMARCB1, SIN3B and DDX4. Interacts with piRNA-associated proteins TDRD1, PIWIL1 and PIWIL2. Interacts with TEX19.

Its subcellular location is the cytoplasm. The protein resides in the nucleus. Plays a central role during spermatogenesis by repressing transposable elements and preventing their mobilization, which is essential for the germline integrity. Acts via the piRNA metabolic process, which mediates the repression of transposable elements during meiosis by forming complexes composed of piRNAs and Piwi proteins and governs the methylation and subsequent repression of transposons. Its association with piP-bodies suggests a participation in the secondary piRNAs metabolic process. Required for the localization of germ-cell factors to the meiotic nuage. The sequence is that of Protein maelstrom homolog (MAEL) from Bos taurus (Bovine).